The sequence spans 267 residues: Sulfur carrier protein FdhD (267 aa).

Residue cysteine 108 is the Cysteine persulfide intermediate of the active site.

Belongs to the FdhD family.

It localises to the cytoplasm. Required for formate dehydrogenase (FDH) activity. Acts as a sulfur carrier protein that transfers sulfur from IscS to the molybdenum cofactor prior to its insertion into FDH. This is Sulfur carrier protein FdhD from Shouchella clausii (strain KSM-K16) (Alkalihalobacillus clausii).